Consider the following 167-residue polypeptide: Ribosome-binding factor A (167 aa).

Positions 127–167 (SRANAQYAGDADPYKHDEPDDDDFDDDDDVEVEDWDDDDEA) are disordered. The span at 145–167 (PDDDDFDDDDDVEVEDWDDDDEA) shows a compositional bias: acidic residues.

This sequence belongs to the RbfA family. As to quaternary structure, monomer. Binds 30S ribosomal subunits, but not 50S ribosomal subunits or 70S ribosomes.

It is found in the cytoplasm. Its function is as follows. One of several proteins that assist in the late maturation steps of the functional core of the 30S ribosomal subunit. Associates with free 30S ribosomal subunits (but not with 30S subunits that are part of 70S ribosomes or polysomes). Required for efficient processing of 16S rRNA. May interact with the 5'-terminal helix region of 16S rRNA. The protein is Ribosome-binding factor A of Bifidobacterium adolescentis (strain ATCC 15703 / DSM 20083 / NCTC 11814 / E194a).